We begin with the raw amino-acid sequence, 209 residues long: Ion-translocating oxidoreductase complex subunit G (209 aa).

A helical membrane pass occupies residues 9-29 (GITLALFAAGATGLTAVVNSL). An FMN phosphoryl threonine modification is found at Thr-175.

This sequence belongs to the RnfG family. As to quaternary structure, the complex is composed of six subunits: RnfA, RnfB, RnfC, RnfD, RnfE and RnfG. FMN serves as cofactor.

It is found in the cell inner membrane. Functionally, part of a membrane-bound complex that couples electron transfer with translocation of ions across the membrane. This chain is Ion-translocating oxidoreductase complex subunit G, found in Yersinia pestis.